Here is a 36-residue protein sequence, read N- to C-terminus: Potassium channel toxin alpha-KTx 16.5 (36 aa).

Intrachain disulfides connect Cys-7/Cys-28, Cys-13/Cys-33, and Cys-17/Cys-35. Residues 26–33 form an interaction with Ca(2+)-activated K(+) channels region; sequence GKCQNKQC.

The protein belongs to the short scorpion toxin superfamily. Potassium channel inhibitor family. Alpha-KTx 16 subfamily. Expressed by the venom gland.

Its subcellular location is the secreted. Its function is as follows. Augments responses to direct muscle stimulation probably by blocking calcium-activated potassium channels. The chain is Potassium channel toxin alpha-KTx 16.5 from Leiurus hebraeus (Hebrew deathstalker scorpion).